Reading from the N-terminus, the 229-residue chain is MNDTDVQKQIQQMVRFIRQEAEEKANEISVAAEEEFNIEKLQLVEAEKKKIRPEYERKEKQVQVRRKIEYSMQLNASRIKVLQAQDDLVNSMKEEAAKELLRVSGDHHHYKRLLKELVVQSLLRLREPGVLLRCREDDVHLVEHVLNSAKEEYAEKAEVHTPEIIVDSIHLPAGPSHHKEHGLHCSGGVVLASRDGKIVFENTLDARLEVAFRKKLPQIRKQLFAVAAA.

Belongs to the V-ATPase E subunit family. In terms of assembly, V-ATPase is a heteromultimeric enzyme composed of a peripheral catalytic V1 complex (components A to H) attached to an integral membrane V0 proton pore complex (components: a, c, c', c'' and d).

Functionally, subunit of the peripheral V1 complex of vacuolar ATPase essential for assembly or catalytic function. V-ATPase is responsible for acidifying a variety of intracellular compartments in eukaryotic cells. The polypeptide is V-type proton ATPase subunit E (VATE) (Spinacia oleracea (Spinach)).